A 307-amino-acid chain; its full sequence is CRISPR-associated endonuclease Cas1 2 (307 aa).

Mn(2+)-binding residues include Glu142, His206, and Glu221.

Belongs to the CRISPR-associated endonuclease Cas1 family. In terms of assembly, homodimer, forms a heterotetramer with a Cas2 homodimer. Forms oligomers, probably binds nucleic acids as a homodimer. Mg(2+) is required as a cofactor. It depends on Mn(2+) as a cofactor.

Its function is as follows. CRISPR (clustered regularly interspaced short palindromic repeat), is an adaptive immune system that provides protection against mobile genetic elements (viruses, transposable elements and conjugative plasmids). CRISPR clusters contain spacers, sequences complementary to antecedent mobile elements, and target invading nucleic acids. CRISPR clusters are transcribed and processed into CRISPR RNA (crRNA). Acts as a dsDNA endonuclease. Involved in the integration of spacer DNA into the CRISPR cassette. In vitro catalyzes a concerted transesterification reaction on branched DNA, as would be expected during integration of protospacers into the CRISPR leader sequence; Cas2 is not required in vitro. This reaction requires a 3'-OH group at the branch point. Binds ss- and dsDNA and ss- and dsRNA with approximately equal affinity. May be able to anneal complementary DNA strands. This is CRISPR-associated endonuclease Cas1 2 from Saccharolobus solfataricus (strain ATCC 35092 / DSM 1617 / JCM 11322 / P2) (Sulfolobus solfataricus).